Reading from the N-terminus, the 272-residue chain is MYSFNDTLGYHAPLDVNNLPDDKTAITIENLDLHYGQSQALYDISMRIPKGRVTAFIGPSGCGKSTLLRCINRMNDLVEGCKVTGSVKLYGSNVYDPSVDVATLRRRVGMVFQRPNPFPKSIYENVVYGLRLQGVKNSRTLDDAVERSLRSAALWDEVKDRLHENAFGLSGGQQQRLVIARAVAIEPEVLLLDEPTSALDPISTLTIEELINDLKTQYTVVIVTHNMQQAARVSDYTAFIHMGKLIEYSDADTIFTSPMKKQTEDYITGRYG.

Positions 26–267 constitute an ABC transporter domain; it reads ITIENLDLHY…PMKKQTEDYI (242 aa). An ATP-binding site is contributed by 58–65; the sequence is GPSGCGKS.

Belongs to the ABC transporter superfamily. Phosphate importer (TC 3.A.1.7) family. The complex is composed of two ATP-binding proteins (PstB), two transmembrane proteins (PstC and PstA) and a solute-binding protein (PstS).

The protein resides in the cell inner membrane. It catalyses the reaction phosphate(out) + ATP + H2O = ADP + 2 phosphate(in) + H(+). Its function is as follows. Part of the ABC transporter complex PstSACB involved in phosphate import. Responsible for energy coupling to the transport system. This Vibrio vulnificus (strain YJ016) protein is Phosphate import ATP-binding protein PstB 1.